A 106-amino-acid polypeptide reads, in one-letter code: Cytochrome c3 (106 aa).

Heme c-binding residues include His-26, His-29, Cys-34, Cys-37, His-38, His-39, Cys-50, Cys-55, His-56, His-75, Cys-82, Cys-85, His-86, Cys-98, Cys-101, and His-102.

In terms of processing, binds 4 heme c groups per subunit.

In terms of biological role, participates in sulfate respiration coupled with phosphorylation by transferring electrons from the enzyme dehydrogenase to ferredoxin. This is Cytochrome c3 from Maridesulfovibrio salexigens (Desulfovibrio salexigens).